We begin with the raw amino-acid sequence, 69 residues long: Amphipathic peptide Hp1404 (69 aa).

Positions 1–23 are cleaved as a signal peptide; that stretch reads MKTQFAILMITVVLMQMLVQTEG. At Phe-37 the chain carries Phenylalanine amide. Positions 41–69 are excised as a propeptide; that stretch reads GLKNLDQLDDSFDSDLSDADVKLLREMFK.

Belongs to the non-disulfide-bridged peptide (NDBP) superfamily. Short antimicrobial peptide (group 4) family. In terms of tissue distribution, expressed by the venom gland.

The protein localises to the secreted. It localises to the target cell membrane. Its activity is regulated as follows. Antibacterial activity is decreased by serum. Functionally, antimicrobial peptide that acts by inducing concentration-dependent membrane disruption, implying a membrane-lytic mode of action. Acts with potent activity against Gram-positive bacteria (MIC=4.04-16.16 uM) including methicillin-resistant S.aureus (MRSA). Its activity on Gram-negative bacteria is controversial. Li and colleagues (2014) describe no activity towards E.coli and P.aeruginosa, while Kim and colleagues (2018) describe a potent activity towards P.aeruginosa (MIC=3.13-12.5 uM), and Luo and colleagues (2021) describe a potent activity against antibiotic-sensitive and -resistant Acinetobacter baumannii strains (MIC=3.2-10 uM). On S.aureus, possibly acts by impairing an unknown intracellular target and/or by interacting with the membrane, leading to the lateral expansion of the membrane area at high MIC concentrations, resulting in the formation of mesosome-like structures that leads to cell lysis. Shows moderate inhibition of P.aeruginosa biofilm formation. Administration of this peptide at sub-MIC concentrations in multiple treatments does not lead to resistance in S.aureus. Exhibits low toxicity and hemolytic activity against mammalian cell lines and BALB/c mice. In vivo, improves the survival rate of the MRSA infected BALB/c mice in the peritonitis model. This chain is Amphipathic peptide Hp1404, found in Heterometrus petersii (Asian forest scorpion).